The following is a 2157-amino-acid chain: MAAFGLLSYEQRPLKRPRLGPPDVYPQDPKQKEDELTAVNVKQGFNNQPAFTGDEHGSARNIVINPSKIGAYFSSILAEKLKLNTFQDTGKKKPQVNAKDNYWLVTARSQSAIHSWFSDLAGNKPLAILAKKVPILSKKEDVFAYLAKYSVPMVRATWLIKMTCAYYSAISEAKIKKRQAPDPNLEWTQISTRYLREQLVKISDFYHMASSTGDGPVPVPPEVEQAMKQWEYNEKLAFHMFQEGMLEKHEYLTWILDVLEKIRPVDDSLLKLLLPLMLQYSDEFVQSAYLSRRLAYFCARRLSLLLSDSPNLLAAHSPHMIIGTNNTSIGTPSPGTPGPGMSPVQLAFSDFLSCAQHGPLVYGLSCMLQTVTLCCPSALVWNYSTNENKISNPGSPLDLLQVAPSSLPMPGGNTAFNQQVRARIYEVEQQIKQRGRAVEVRWSFDKCQESTAGVTISRVLHTLEVLDRHCFDRTDSSNSMETLYHKIFWANQNKDNQEVAPNDEAVVTLLCEWAVSCKRSGKHRAMAVAKLLEKRQAEIEAERCGESEVLDEKESISSASLAGSSLPVFQNVLLRFLDTQAPALSDPNSECEKVEFVNLVLLFCEFIRHDVFSHDAYMCTLISRGDLSVTASTGLRSPAGENSDEHYSKDHDMKMEIFSPMPGESCENINPSLSRRLSVNGEKLLKREKPRELIFPSNYDLLRHLQYATHFPIPLDESSSHECNQRTILLYGVGKERDEARHQLKKITKDILKILNKKGTTESGVGDEGQKARKTKQEVFPTPENVFTKLQLLSYFDQHQVTSQISNNVLEQITSFASGTSYHLPLAHHIQLIFDLMEPALNINGLIDFAIQLLNELSVVEAELLLKSSSLAGSYTTGLCVCIVAVLRRYHSCLILNPDQTAQVFEGLCGVVKHVVNPSECSSPERCILAYLYDLYVSCSHLRSKFGDLFSSACSKVKQTIYNNVMPANSNLRWDPDFMMDFIENPSARSINYSMLGKILNDNAANRYSFVCNTLMNVCMGHQDAGRINDIANFSSELTACCTVLSSEWLGVLKALCCSSNHVWGFNDVLCTVDVSDLSFHDSLATFIAILIARQCFSLEDVVQHVALPSLLAAACGDADAEPGARMTCRLLLHLFRAPQACFFPQGTGKPFPGIRSSCDRHLLAAAHNSIEVGAVFAVLKAIMMLGDAKIGSNNVNTMKNEDFGMRGLRRDGNAEDAWATSQNSKSYGKSISIETANLREYARYVLRTICQQEWVGEHCLKEPERLCTDKELILDPVLSNMQAQKLLQLICYPHGIKECTEGDNLQRQHIKRILQNLEQWTLRQSWLELQLMIKQCLKDPSSGSVAEMNNLLDNIAKATIEVFQQSADLNNNASNSGMSLFNPNTIGSVDPSSTRQNGIKTFLSSSERRGVWLVAPLIARLPTSVQGRVLKAAGEELEKGQHLGSSSKKERDRQKQKSMSLLSQQPFLSLVLTCLKGQDEQREGLLTSLQNQVNQILSNWREERYQDDTKARQMMHEALQLRLNLVGGMFDTVQRSTQGTTDWALLLLQIITSGTVDMHTNNELFTTVLDMLGVLINGTLASDLSSASPGGSEENKRAYMNLVKKLKKELGDKRSESIDKVRQLLPLPKQTCDVITCEPMGSLIDTKGNKIAGFDSIDKKQARGLQVSTKQKVSPWDLFEGQKNPAPLSWAWFGTVRVDRKVIKYEEQQHFLLYHTHTMPKPRSYYLEPLPLPPEEEEEELTSPVSQEPERKSAELSDQGKATADEEKKTKGRKRKTKSSSRIDEYQQTNLYRVPPNYSPMSSQMTHHPQPALWGYNLVSQPQQPSFFLQNPSLNPGGSRLDPAGSFVPTNTKQALSNMLQRRSGAMLQPPSLHAVTSQQQLLQMKLLQQQQQQQQQQQQQQQRLLRQAQTRPFQQGQPGDQAALFTAQARPSPQLPQYPGLQQAQTMPQGYTMYGTQMPLQQAAQQQPGGVVLSPSYNSRAYPAAHSSPALMERLRQLQQQPSGYVQQQASPYLQPVAGSQRLNHQALQQSPLVGGGIDAVLTPAHPNLPSVPLPQDPMRPRQQQVRQQQRLLQVWGREMQQPQQAPQPQQPSQTQSQALGLQAMQPQQPLFPRQGLQQTQQQQQTAALVRQLQKQLSSNQPQQGVTPCAHPSHF.

Residues 1–31 (MAAFGLLSYEQRPLKRPRLGPPDVYPQDPKQ) form a disordered region. Threonine 462 carries the phosphothreonine modification. Over residues 1437–1456 (ELEKGQHLGSSSKKERDRQK) the composition is skewed to basic and acidic residues. Disordered regions lie at residues 1437 to 1461 (ELEKGQHLGSSSKKERDRQKQKSMS), 1724 to 1807 (RSYY…SQMT), and 2040 to 2157 (IDAV…PSHF). The segment covering 1771–1780 (TKGRKRKTKS) has biased composition (basic residues). Low complexity-rich tracts occupy residues 2063–2076 (PRQQQVRQQQRLLQ), 2083–2101 (QQPQQAPQPQQPSQTQSQA), and 2116–2136 (RQGLQQTQQQQQTAALVRQLQ). The segment covering 2137–2148 (KQLSSNQPQQGV) has biased composition (polar residues).

The protein belongs to the Mediator complex subunit 12 family. May be a component of the Mediator complex, which is known to be composed of MED1, MED4, MED6, MED7, MED8, MED9, MED10, MED11, MED12, MED13, MED13L, MED14, MED15, MED16, MED17, MED18, MED19, MED20, MED21, MED22, MED23, MED24, MED25, MED26, MED27, MED29, MED30, MED31, CCNC, CDK8 and CDC2L6/CDK11. The MED12, MED13, CCNC and CDK8 subunits form a distinct module termed the CDK8 module. Mediator containing the CDK8 module is less active than Mediator lacking this module in supporting transcriptional activation. Individual preparations of the Mediator complex lacking one or more distinct subunits have been variously termed ARC, CRSP, DRIP, PC2, SMCC and TRAP.

It localises to the nucleus. In terms of biological role, may be a component of the Mediator complex, a coactivator involved in the regulated transcription of nearly all RNA polymerase II-dependent genes. Mediator functions as a bridge to convey information from gene-specific regulatory proteins to the basal RNA polymerase II transcription machinery. Mediator is recruited to promoters by direct interactions with regulatory proteins and serves as a scaffold for the assembly of a functional preinitiation complex with RNA polymerase II and the general transcription factors. The chain is Mediator of RNA polymerase II transcription subunit 12-like protein (Med12l) from Mus musculus (Mouse).